The sequence spans 101 residues: NADH-quinone oxidoreductase subunit K (101 aa).

The next 3 membrane-spanning stretches (helical) occupy residues 4–24, 30–50, and 65–85; these read LEHY…GIFL, IVIL…LVAF, and FVLT…VTFF.

Belongs to the complex I subunit 4L family. As to quaternary structure, NDH-1 is composed of 14 different subunits. Subunits NuoA, H, J, K, L, M, N constitute the membrane sector of the complex.

The protein localises to the cell inner membrane. It carries out the reaction a quinone + NADH + 5 H(+)(in) = a quinol + NAD(+) + 4 H(+)(out). NDH-1 shuttles electrons from NADH, via FMN and iron-sulfur (Fe-S) centers, to quinones in the respiratory chain. The immediate electron acceptor for the enzyme in this species is believed to be ubiquinone. Couples the redox reaction to proton translocation (for every two electrons transferred, four hydrogen ions are translocated across the cytoplasmic membrane), and thus conserves the redox energy in a proton gradient. This chain is NADH-quinone oxidoreductase subunit K, found in Cereibacter sphaeroides (strain ATCC 17029 / ATH 2.4.9) (Rhodobacter sphaeroides).